The chain runs to 343 residues: Dihydroorotase (343 aa).

The Zn(2+) site is built by H14 and H16. Residues H16–R18 and N42 each bind substrate. Zn(2+) contacts are provided by K99, H136, and H174. K99 carries the post-translational modification N6-carboxylysine. Residue H136 coordinates substrate. Residue L219 participates in substrate binding. D247 is a binding site for Zn(2+). D247 is an active-site residue. Substrate contacts are provided by H251 and A263.

Belongs to the metallo-dependent hydrolases superfamily. DHOase family. Class II DHOase subfamily. As to quaternary structure, homodimer. The cofactor is Zn(2+).

The catalysed reaction is (S)-dihydroorotate + H2O = N-carbamoyl-L-aspartate + H(+). It participates in pyrimidine metabolism; UMP biosynthesis via de novo pathway; (S)-dihydroorotate from bicarbonate: step 3/3. Catalyzes the reversible cyclization of carbamoyl aspartate to dihydroorotate. This is Dihydroorotase from Variovorax paradoxus (strain S110).